The following is a 2372-amino-acid chain: Nonribosomal peptide synthase roqA (2372 aa).

Residues 217–610 form an adenylation 1 region; sequence EHCRSQPDAE…VGRKDREVKI (394 aa). Positions 723-745 are disordered; it reads AASSHSSTREQPSNQRDKEDVEL. Positions 725 to 736 are enriched in polar residues; sequence SSHSSTREQPSN. In terms of domain architecture, Carrier 1 spans 750 to 823; it reads SAKENTLCSV…KIARCTAESK (74 aa). Ser-784 bears the O-(pantetheine 4'-phosphoryl)serine mark. The interval 856–1122 is condensation 1; that stretch reads EDIYPCTPLQ…FATFPFRTQL (267 aa). The adenylation 2 stretch occupies residues 1290–1679; that stretch reads QPNSEAVCAW…VGRKDTQVKL (390 aa). Positions 1819–1895 constitute a Carrier 2 domain; the sequence is KPTTEQERFV…LFCKHVILIQ (77 aa). O-(pantetheine 4'-phosphoryl)serine is present on Ser-1856. The condensation 2 stretch occupies residues 1962–2227; sequence TSNYTSTAIF…FNVLPCRIAI (266 aa).

It functions in the pathway alkaloid biosynthesis. Dipeptide synthase; part of the gene cluster that mediates the biosynthesis of the mycotoxins roquefortine C and meleagrin. The first stage is catalyzed by the dipeptide synthase roqA which condenses histidine and tryptophan to produce histidyltryptophanyldiketopiperazine (HTD). HTD is then converted to roquefortine C through two possible pathways. In the first pathway, prenyltransferase roqD transforms HTD to the intermediate roquefortine D, which is in turn converted to roquefortine C by the cytochrome P450 monooxygenase roqR. In the second pathway, HTD is first converted to the intermediate dehydrohistidyltryptophanyldi-ketopiperazine (DHTD) by roqR which is then prenylated by roqD to form roquefortine C. Roquefortine C can be further transformed to meleagrin via three more reactions including oxydation to glandicolin A by roqM, which is further reduced to glandicoline B by roqO. Finally, glandicoline B is converted to meleagrin by the glandicoline B O-methyltransferase roqN. More studies identified further branching and additional metabolites produced by the roquefortine/meleagrin cluster, including roquefortine F, roquefortine L, roquefortine M, roquefortine N and neoxaline. In Penicillium rubens (strain ATCC 28089 / DSM 1075 / NRRL 1951 / Wisconsin 54-1255) (Penicillium chrysogenum), this protein is Nonribosomal peptide synthase roqA.